Here is a 276-residue protein sequence, read N- to C-terminus: Kallikrein-11 (276 aa).

The signal sequence occupies residues 1 to 44 (MRRLKSDWKLSTETREPGARPALLQARMILRLIALALVTGHVGG). The propeptide at 45–47 (ETR) is activation peptide. Residues 48–274 (IIKGYECRPH…YFNWIHEVMR (227 aa)) enclose the Peptidase S1 domain. 5 disulfide bridges follow: cysteine 54-cysteine 189, cysteine 73-cysteine 89, cysteine 168-cysteine 235, cysteine 200-cysteine 214, and cysteine 225-cysteine 250. Histidine 88 acts as the Charge relay system in catalysis. A glycan (N-linked (GlcNAc...) asparagine) is linked at asparagine 125. Aspartate 136 serves as the catalytic Charge relay system. Residues asparagine 191 and asparagine 207 are each glycosylated (N-linked (GlcNAc...) asparagine). The active-site Charge relay system is the serine 229. The N-linked (GlcNAc...) asparagine glycan is linked to asparagine 236.

The protein belongs to the peptidase S1 family. Kallikrein subfamily. As to expression, expressed in brain and prostate (isoform 1) and prostate (isoform 2).

Its subcellular location is the secreted. Its function is as follows. Possible multifunctional protease. Efficiently cleaves 'bz-Phe-Arg-4-methylcoumaryl-7-amide', a kallikrein substrate, and weakly cleaves other substrates for kallikrein and trypsin. The polypeptide is Kallikrein-11 (Klk11) (Mus musculus (Mouse)).